The sequence spans 645 residues: Glucans biosynthesis glucosyltransferase H (645 aa).

The interval 1-28 is disordered; the sequence is MDGTVTLSPAPTDLPPVSSLDAGQPTLP. Transmembrane regions (helical) follow at residues 64–84, 98–118, 423–443, 465–485, 504–524, 558–578, and 580–600; these read LIGGTLTATAVAVWVMLSVLW, LFVLLFAWIAMSFASAVAGFI, APMWGMLMLVGIGIPLAGAGI, AIWIFVCTMFVLLAPKLLGYI, ALSILLETVLAALMAPVVMYL, SYGGLSVFGLFMGTLAYLVSP, and LAAWMAPVIVGMVVSIPVVAV.

Belongs to the glycosyltransferase 2 family. OpgH subfamily.

The protein localises to the cell inner membrane. Its pathway is glycan metabolism; osmoregulated periplasmic glucan (OPG) biosynthesis. In terms of biological role, involved in the biosynthesis of osmoregulated periplasmic glucans (OPGs). This chain is Glucans biosynthesis glucosyltransferase H, found in Xanthomonas campestris pv. campestris (strain B100).